The following is a 469-amino-acid chain: Glutamate--tRNA ligase (469 aa).

The 'HIGH' region motif lies at 11 to 21; that stretch reads PSPTGFIHLGN. Residues 118-131 are compositionally biased toward basic and acidic residues; that stretch reads GEKPRYDGTWRPEP. The segment at 118–138 is disordered; it reads GEKPRYDGTWRPEPGKVLPEP. The 'KMSKS' region signature appears at 243-247; it reads KMSKR. Residue K246 participates in ATP binding.

Belongs to the class-I aminoacyl-tRNA synthetase family. Glutamate--tRNA ligase type 1 subfamily. Monomer.

It is found in the cytoplasm. The catalysed reaction is tRNA(Glu) + L-glutamate + ATP = L-glutamyl-tRNA(Glu) + AMP + diphosphate. Catalyzes the attachment of glutamate to tRNA(Glu) in a two-step reaction: glutamate is first activated by ATP to form Glu-AMP and then transferred to the acceptor end of tRNA(Glu). The sequence is that of Glutamate--tRNA ligase from Burkholderia thailandensis (strain ATCC 700388 / DSM 13276 / CCUG 48851 / CIP 106301 / E264).